The following is a 152-amino-acid chain: Deoxyuridine 5'-triphosphate nucleotidohydrolase (152 aa).

Substrate is bound by residues 72–74 (RSG), asparagine 85, and 89–91 (TVD).

The protein belongs to the dUTPase family. Mg(2+) is required as a cofactor.

It catalyses the reaction dUTP + H2O = dUMP + diphosphate + H(+). It participates in pyrimidine metabolism; dUMP biosynthesis; dUMP from dCTP (dUTP route): step 2/2. Its function is as follows. This enzyme is involved in nucleotide metabolism: it produces dUMP, the immediate precursor of thymidine nucleotides and it decreases the intracellular concentration of dUTP so that uracil cannot be incorporated into DNA. The chain is Deoxyuridine 5'-triphosphate nucleotidohydrolase from Nitrobacter hamburgensis (strain DSM 10229 / NCIMB 13809 / X14).